Here is a 241-residue protein sequence, read N- to C-terminus: Small ribosomal subunit protein uS2 (241 aa).

This sequence belongs to the universal ribosomal protein uS2 family.

The chain is Small ribosomal subunit protein uS2 from Salmonella agona (strain SL483).